Reading from the N-terminus, the 92-residue chain is YcgL domain-containing protein Sbal_1869 (92 aa).

In terms of domain architecture, YcgL spans 1-85 (MLCAVYKSSR…PQVNLLAEHK (85 aa)).

The protein is YcgL domain-containing protein Sbal_1869 of Shewanella baltica (strain OS155 / ATCC BAA-1091).